Reading from the N-terminus, the 705-residue chain is MSQPLTTRPTVTGISIIPFRQPPPLCSFLFVIVLFVATFYTLHHPDAVTPPLLFSRNAYNALRLRRLFLSSASNATISSYLRELTRHPHLAGTKPSLDTLHYVFNHFQSLGLETHVAEYEALLSYPTHISVTASFSNTTTLEFDLNDVPGDSPVVRPYHAYSPSGSAQGNVVFVNHGEERDYHALESIGVSVKGCVVLARKGENLGRGAIVKIAEAKGALGVLIYAENDGGGFGGIERGTVMRGIGDPVSPGWPGVVGGEKLSLDDELVTRRFPKIPSLPLSLRNAEIILASLGGARAPLEWRNSGRVGPGQRVGPGRMVINMTFQGEMKMKKINNVVVTIRGSEEADRYVILGNHRDAWTYGAVDPNSGTSALLDISRRFALLLKSGWRPRRTILLCSWDAEEFGMIGSTEWIEENVLNLGASAVAYLNVDCAVQGSGFFAGATPQLDGLLVDVLKLVQDPDAVGLTVEETFKSQNNIIQRLSRVDSDFSGFLHHAGIPSIDMYYGADYPVYHTAFDSYDWMIHNADPLFHRHVAMAGIWGLLGILLADEPLIPFDYISYADQLQAHRDKLSKLLEGKVSVNPLSMAIQEFSLVAKEAADEAKKLKGKSYSKNDVAAAAKRRELNDRLMLVERGFLDAEGIKGKEWFKHLVYGPAAEPESKLGFFPGIADAIAMNASEGIIEHEIWRVARAIQRASKALKGGFT.

At Met-1 to Pro-24 the chain is on the cytoplasmic side. A helical; Signal-anchor for type II membrane protein membrane pass occupies residues Leu-25–Leu-42. Over His-43–Thr-705 the chain is Extracellular. Residues Asn-74, Asn-137, and Asn-322 are each glycosylated (N-linked (GlcNAc...) asparagine). Residues Gly-255–Leu-548 are catalytic. 2 residues coordinate Zn(2+): His-356 and Asp-366. Residue Glu-403 is the Nucleophile of the active site. Zn(2+)-binding residues include Glu-404, Asp-432, and His-514. N-linked (GlcNAc...) asparagine glycosylation is present at Asn-676.

It belongs to the peptidase M28 family. M28B subfamily. Requires Zn(2+) as cofactor. Expressed in all plant parts. Highest levels in the bolt stem, inflorescence, root and silique. Low level in leaves.

Its subcellular location is the endoplasmic reticulum membrane. It catalyses the reaction Release of an unsubstituted, C-terminal glutamyl residue, typically from Ac-Asp-Glu or folylpoly-gamma-glutamates.. Functionally, may modulate the level of one or more small signaling molecules that have a role in regulating meristem function. May play a role in balancing and restricting the meristem-promoting activity of auxin signaling. Involved in ethylene and giberellin (GA) signaling pathways or in a parallel pathway controlling cell and hypocotyl elongation and cellular organization. Involved in abscisic acid (ABA) signaling pathway. Plays a negative role in ABA-mediated seed germination and seedling development. Acts in association with LAMP1 to suppress ectopic stem cell niche formation in the shoot apical meristem (SAM) independently of cytokinin signaling pathway. Modulates responses to ABA, oxidative stress and abotic stress. Acts as a negative regulator of the ABA signaling pathway to modulate freezing and drought stress responses. Mediates carbon and amino acid metabolism. May be involved in the acquisition and/or maintenance of seed dormancy. Involved in the regulation of response to heat shock and plant defense. The polypeptide is Probable glutamate carboxypeptidase AMP1 (Arabidopsis thaliana (Mouse-ear cress)).